The chain runs to 139 residues: Small ribosomal subunit protein bS6 (139 aa).

Residues 120–139 (KGASKVETPTGPESTDIQEK) are disordered. Positions 130–139 (GPESTDIQEK) are enriched in polar residues.

The protein belongs to the bacterial ribosomal protein bS6 family.

In terms of biological role, binds together with bS18 to 16S ribosomal RNA. The protein is Small ribosomal subunit protein bS6 (rpsF) of Borreliella burgdorferi (strain ATCC 35210 / DSM 4680 / CIP 102532 / B31) (Borrelia burgdorferi).